The chain runs to 222 residues: Protein-L-isoaspartate O-methyltransferase (222 aa).

Serine 73 is a catalytic residue.

The protein belongs to the methyltransferase superfamily. L-isoaspartyl/D-aspartyl protein methyltransferase family.

The protein resides in the cytoplasm. The enzyme catalyses [protein]-L-isoaspartate + S-adenosyl-L-methionine = [protein]-L-isoaspartate alpha-methyl ester + S-adenosyl-L-homocysteine. Its function is as follows. Catalyzes the methyl esterification of L-isoaspartyl residues in peptides and proteins that result from spontaneous decomposition of normal L-aspartyl and L-asparaginyl residues. It plays a role in the repair and/or degradation of damaged proteins. In Chromobacterium violaceum (strain ATCC 12472 / DSM 30191 / JCM 1249 / CCUG 213 / NBRC 12614 / NCIMB 9131 / NCTC 9757 / MK), this protein is Protein-L-isoaspartate O-methyltransferase.